The following is a 263-amino-acid chain: MNKQAATEKLVAVDIGNTSVNIGIFEGEQLLANWHLGSVAQRMADEYASLLLGLLQHAGIQAGELNRVIMCSVVPPLTTTFEEVFKTYFKATPLVVGAGIKSGVKIRMDNPREVGADRIVNAAAARVLYPGACIIVDMGTATTFDTLSESGEYIGGAIAPGIATSAQAIVEKTSKLPKIEIIHPAKAIGSNTVSAMQSGVYFGYIGLVEELVRRIQAELGQKARVVATGGYASLIAEGSRIFDIVRSDLTLQGLRFIYQMNKV.

14–21 (DIGNTSVN) serves as a coordination point for ATP. 115-118 (GADR) contacts substrate. Aspartate 117 acts as the Proton acceptor in catalysis. Aspartate 137 is a K(+) binding site. Threonine 140 serves as a coordination point for ATP. Threonine 192 provides a ligand contact to substrate.

The protein belongs to the type III pantothenate kinase family. Homodimer. NH4(+) serves as cofactor. It depends on K(+) as a cofactor.

The protein localises to the cytoplasm. It catalyses the reaction (R)-pantothenate + ATP = (R)-4'-phosphopantothenate + ADP + H(+). Its pathway is cofactor biosynthesis; coenzyme A biosynthesis; CoA from (R)-pantothenate: step 1/5. Catalyzes the phosphorylation of pantothenate (Pan), the first step in CoA biosynthesis. The protein is Type III pantothenate kinase of Dehalococcoides mccartyi (strain ATCC BAA-2100 / JCM 16839 / KCTC 5957 / BAV1).